A 324-amino-acid polypeptide reads, in one-letter code: Putative transport protein TM_1187 (324 aa).

The next 8 helical transmembrane spans lie at 12–32 (LYLVLFLVLAKLSPFIITALI), 62–82 (ISNVLVFLTIAYSAVNFFPVI), 105–125 (IPGWLSSILSSISASFSEGAL), 131–151 (IVGYVPSFITAAILIVITAFI), 190–210 (GGQVLVAIFVGLFVGFGAFIF), 227–247 (FVPYLGVVISAIPLLMLAFSV), 252–272 (GLLIGTIILVAANQLEMWVLA), and 285–305 (FIILIMILILGDLFSFGGVLI).

Belongs to the autoinducer-2 exporter (AI-2E) (TC 2.A.86) family.

It is found in the cell membrane. This Thermotoga maritima (strain ATCC 43589 / DSM 3109 / JCM 10099 / NBRC 100826 / MSB8) protein is Putative transport protein TM_1187.